Here is a 593-residue protein sequence, read N- to C-terminus: Chromosomal replication initiator protein DnaA (593 aa).

The interval 1–71 (MSDPCWEQCV…EIISNSDAGP (71 aa)) is domain I, interacts with DnaA modulators. A domain II region spans residues 71-256 (PKSLEIAVAQ…DVEGGIQHKH (186 aa)). A disordered region spans residues 97 to 186 (AVPVPDPLPS…STESSADRER (90 aa)). Residues 113 to 124 (SFQPPKGNTSAD) show a composition bias toward polar residues. The domain III, AAA+ region stretch occupies residues 257–473 (NLNTTFIFDN…GALKRVIANA (217 aa)). The ATP site is built by glycine 301, glycine 303, lysine 304, and threonine 305. The segment at 474 to 593 (QFTQRSISVE…VKNLLRTLTT (120 aa)) is domain IV, binds dsDNA.

The protein belongs to the DnaA family. As to quaternary structure, oligomerizes as a right-handed, spiral filament on DNA at oriC.

It is found in the cytoplasm. Plays an essential role in the initiation and regulation of chromosomal replication. ATP-DnaA binds to the origin of replication (oriC) to initiate formation of the DNA replication initiation complex once per cell cycle. Binds the DnaA box (a 9 base pair repeat at the origin) and separates the double-stranded (ds)DNA. Forms a right-handed helical filament on oriC DNA; dsDNA binds to the exterior of the filament while single-stranded (ss)DNA is stabiized in the filament's interior. The ATP-DnaA-oriC complex binds and stabilizes one strand of the AT-rich DNA unwinding element (DUE), permitting loading of DNA polymerase. After initiation quickly degrades to an ADP-DnaA complex that is not apt for DNA replication. Binds acidic phospholipids. In Teredinibacter turnerae (strain ATCC 39867 / T7901), this protein is Chromosomal replication initiator protein DnaA.